The sequence spans 264 residues: Tritrans,polycis-undecaprenyl-diphosphate synthase (geranylgeranyl-diphosphate specific) (264 aa).

Asp-43 is a catalytic residue. A Mg(2+)-binding site is contributed by Asp-43. Residues 44 to 47 (GNRR), Trp-48, His-60, and 88 to 90 (STE) contribute to the substrate site. Asn-91 serves as the catalytic Proton acceptor. Substrate contacts are provided by residues Phe-92, Arg-94, Arg-213, and 219-221 (RIS). A Mg(2+)-binding site is contributed by Glu-232.

It belongs to the UPP synthase family. As to quaternary structure, homodimer. Mg(2+) is required as a cofactor.

The enzyme catalyses geranylgeranyl diphosphate + 7 isopentenyl diphosphate = tri-trans,hepta-cis-undecaprenyl diphosphate + 7 diphosphate. Catalyzes the sequential condensation of isopentenyl diphosphate (IPP) with geranylgeranyl diphosphate (GGPP) to yield (2Z,6Z,10Z,14Z,18Z,22Z,26Z,30E,34E,38E)-undecaprenyl diphosphate (tritrans,heptacis-UPP). It is probably the precursor of glycosyl carrier lipids. In Thermococcus kodakarensis (strain ATCC BAA-918 / JCM 12380 / KOD1) (Pyrococcus kodakaraensis (strain KOD1)), this protein is Tritrans,polycis-undecaprenyl-diphosphate synthase (geranylgeranyl-diphosphate specific).